Reading from the N-terminus, the 391-residue chain is Chaperone protein DnaJ (391 aa).

The J domain maps to 6–71 (CYYEVLKVER…NKRARYDQYG (66 aa)). The segment at 137-215 (GCHKDIVFRR…CRGTGTQNEK (79 aa)) adopts a CR-type zinc-finger fold. 8 residues coordinate Zn(2+): Cys150, Cys153, Cys167, Cys170, Cys189, Cys192, Cys203, and Cys206. CXXCXGXG motif repeat units follow at residues 150–157 (CDTCDGSG), 167–174 (CTMCGGQG), 189–196 (CPTCKGAG), and 203–210 (CGKCRGTG). The segment at 372–391 (FFDPEPEEAGTGSTDTEKDS) is disordered.

This sequence belongs to the DnaJ family. Homodimer. Zn(2+) is required as a cofactor.

The protein resides in the cytoplasm. Participates actively in the response to hyperosmotic and heat shock by preventing the aggregation of stress-denatured proteins and by disaggregating proteins, also in an autonomous, DnaK-independent fashion. Unfolded proteins bind initially to DnaJ; upon interaction with the DnaJ-bound protein, DnaK hydrolyzes its bound ATP, resulting in the formation of a stable complex. GrpE releases ADP from DnaK; ATP binding to DnaK triggers the release of the substrate protein, thus completing the reaction cycle. Several rounds of ATP-dependent interactions between DnaJ, DnaK and GrpE are required for fully efficient folding. Also involved, together with DnaK and GrpE, in the DNA replication of plasmids through activation of initiation proteins. The protein is Chaperone protein DnaJ of Rhodopirellula baltica (strain DSM 10527 / NCIMB 13988 / SH1).